We begin with the raw amino-acid sequence, 544 residues long: Prolyl 4-hydroxylase subunit alpha-3 (544 aa).

A signal peptide spans 1–19 (MGPAARLAALLAVLAFRAG). Residues 107 to 131 (LEASENIRALKDGYERVEQDLPAFE) adopt a coiled-coil conformation. The TPR repeat unit spans residues 227-260 (EDALDHLAFAYFQAGNVLCALNLSREFLLYSPDN). Asn-248 carries N-linked (GlcNAc...) asparagine glycosylation. The 108-residue stretch at 422–529 (YAEYLQVVNY…KWVANKWIHE (108 aa)) folds into the Fe2OG dioxygenase domain. Residues His-440 and Asp-442 each contribute to the Fe cation site. The N-linked (GlcNAc...) asparagine glycan is linked to Asn-482. Position 510 (His-510) interacts with Fe cation. A 2-oxoglutarate-binding site is contributed by Lys-520.

It belongs to the P4HA family. In terms of assembly, heterotetramer of two alpha-3 chains and two beta chains (the beta chain is the multi-functional PDI). Fe(2+) serves as cofactor. Requires L-ascorbate as cofactor. N-glycosylation plays no role in the catalytic activity.

It is found in the endoplasmic reticulum lumen. The catalysed reaction is L-prolyl-[collagen] + 2-oxoglutarate + O2 = trans-4-hydroxy-L-prolyl-[collagen] + succinate + CO2. Its function is as follows. Catalyzes the post-translational formation of 4-hydroxyproline in -Xaa-Pro-Gly- sequences in collagens and other proteins. The polypeptide is Prolyl 4-hydroxylase subunit alpha-3 (P4HA3) (Bos taurus (Bovine)).